Here is a 149-residue protein sequence, read N- to C-terminus: Calmodulin (149 aa).

Ala-2 is modified (N-acetylalanine). EF-hand domains follow at residues Glu-8–Asn-43, Pro-44–Asp-79, Asp-81–Lys-116, and Leu-117–Lys-149. Asp-21, Asp-23, Asp-25, Thr-27, Glu-32, Asp-57, Asp-59, Asn-61, Thr-63, Glu-68, Asp-94, Asp-96, Asn-98, and Glu-105 together coordinate Ca(2+). Lys-116 carries the post-translational modification N6,N6,N6-trimethyllysine. Asp-130, Asp-132, Asp-134, Gln-136, and Glu-141 together coordinate Ca(2+).

Belongs to the calmodulin family.

Calmodulin mediates the control of a large number of enzymes, ion channels and other proteins by Ca(2+). Among the enzymes to be stimulated by the calmodulin-Ca(2+) complex are a number of protein kinases and phosphatases. The protein is Calmodulin of Ciona intestinalis (Transparent sea squirt).